A 532-amino-acid chain; its full sequence is Glycerophosphocholine permease GIT4 (532 aa).

The next 6 helical transmembrane spans lie at 55-75 (LWPAFASGAGLFSDGYVNAGI), 98-118 (NIGSIGFVGTVVGQLSFGYIS), 126-146 (GMLTANVMLIFFTLMCAVASW), 150-170 (VQGFFACLTVWRFFLGIAIGA), 201-221 (AMIDFGFVVSSFVPLVLLWIF), and 229-249 (VWRLSIGLGVIPPLILFFIRL). The N-linked (GlcNAc...) asparagine glycan is linked to Asn266. A helical transmembrane segment spans residues 272 to 292 (WWLIIKFYWFRLTVVSLIWFI). A glycan (N-linked (GlcNAc...) asparagine) is linked at Asn314. Transmembrane regions (helical) follow at residues 321–341 (WGWSVVFNLFYMPGAFLGAFI), 349–369 (LTLAIGVGAQGIIGIAMSACL), and 375–395 (HVAGFVVVFGIFSTFGEFGPG). The N-linked (GlcNAc...) asparagine glycan is linked to Asn396. Helical transmembrane passes span 416 to 436 (GIAAAIGKIGAFVGTWVFPAI) and 450 to 470 (VPFYVSSALCLFSAFLTIFFV).

It belongs to the major facilitator superfamily. Sugar transporter (TC 2.A.1.1) family.

It is found in the cell membrane. It catalyses the reaction sn-glycerol 3-phosphocholine(out) = sn-glycerol 3-phosphocholine(in). In terms of biological role, glycerophosphodiester transporter that mediates uptake of glycerophosphocholine (GroPCho) with GIT3. Does not possess detectable glycerophosphoinositol (GroPIns) transport activity. The expanded ability to utilize GroPIns and GroPCho results from the organism's pathogenic nature and its need to occupy a variety of environments within its host organism. This possibility is buttressed by the fact that GroPIns and GroPCho are present and abundant in human fluids. The chain is Glycerophosphocholine permease GIT4 from Candida albicans (strain SC5314 / ATCC MYA-2876) (Yeast).